Consider the following 359-residue polypeptide: MSTTIRASQLASSISPKTEEKQPSVFDIIAQENLATSIRPALQHLVKYLAFFKPKTFLSVHRNFDEYYIIFDLILQNHYLRNYGASFTENFYSMKRIASGTGNPPNDGRERIMSLITLVGWPYVENKLNQLYDRLKEVYECRSWSSINGMKAKCQKMFVIIWPYIKTALKAVKSALQLAYILNRSSIHSPWLYFSGVILKHLTPEDLEAFNAVPLHLQTGYQISRGTLNEHIHLRFFNRIWRFILGLPGIVSRLFAYGLFFVQFLDYMYNTDLAKLTKTGLDGAIPSPPHKMIISESEILSLDTNKCPICLKKRVNDTALFVSGYVFCYTCINQYVNTYNKCPVTGCPANVQHLIRLFV.

Residues Met1–Ser24 are Peroxisomal matrix-facing. The chain crosses the membrane as a helical span at residues Val25–Phe52. Topologically, residues Lys53–Thr56 are cytoplasmic. A helical transmembrane segment spans residues Phe57 to Arg81. Over Asn82–Asn106 the chain is Peroxisomal matrix. The chain crosses the membrane as a helical span at residues Asp107–Leu128. Over Asn129 to Asp133 the chain is Cytoplasmic. A helical membrane pass occupies residues Arg134–Arg184. Over Ser185–Arg253 the chain is Peroxisomal matrix. A helical transmembrane segment spans residues Leu254–Leu281. Residues Asp282 to Val359 lie on the Cytoplasmic side of the membrane. Zn(2+) is bound by residues Cys307, Cys310, Cys328, and Cys331. The segment at Cys307–Gly346 adopts an RING-type; degenerate zinc-finger fold.

This sequence belongs to the pex2/pex10/pex12 family. As to quaternary structure, component of the PEX2-PEX10-PEX12 retrotranslocation channel.

The protein resides in the peroxisome membrane. Its pathway is protein modification; protein ubiquitination. Functionally, component of a retrotranslocation channel required for peroxisome organization by mediating export of the PEX5/prx-5 receptor from peroxisomes to the cytosol, thereby promoting PEX5/prx-5 recycling. The retrotranslocation channel is composed of PEX2/prx-2, PEX10/prx-10 and PEX12/prx-12; each subunit contributing transmembrane segments that coassemble into an open channel that specifically allows the passage of PEX5/prx-5 through the peroxisomal membrane. PEX12/prx-12 also regulates PEX5/prx-5 recycling by activating the E3 ubiquitin-protein ligase activity of PEX10/prx-10. When PEX5 recycling is compromised, PEX12/prx-12 stimulates PEX10-mediated polyubiquitination of PEX5/prx-5, leading to its subsequent degradation. The sequence is that of Peroxisome assembly protein 12 (prx-12) from Caenorhabditis elegans.